We begin with the raw amino-acid sequence, 232 residues long: MNYITFPTAQHAVEKIAQEFVIYSQLNHPAHISLSGGSTPKLLFKTLAQSPYAEQINWRNLHFWWGDDRMVSPSDPESNYGEVQKLLFDHIQIPAENIHRIRGENEPHFELKRFQAELSAVISDGVFDWIILGMGADGHTSSLFPHQTNFDDENLAVIAKHPESGQIRISKTAKLIEQAKRITYLVTGEGKAEILKEIQSTPAENLPYPAAKIYAKNGVTEWYLDKDAAKLL.

This sequence belongs to the glucosamine/galactosamine-6-phosphate isomerase family. 6-phosphogluconolactonase subfamily.

The enzyme catalyses 6-phospho-D-glucono-1,5-lactone + H2O = 6-phospho-D-gluconate + H(+). Its pathway is carbohydrate degradation; pentose phosphate pathway; D-ribulose 5-phosphate from D-glucose 6-phosphate (oxidative stage): step 2/3. In terms of biological role, hydrolysis of 6-phosphogluconolactone to 6-phosphogluconate. The chain is 6-phosphogluconolactonase (pgl) from Aggregatibacter actinomycetemcomitans (Actinobacillus actinomycetemcomitans).